The primary structure comprises 85 residues: Large ribosomal subunit protein bL27 (85 aa).

A disordered region spans residues 1-20; sequence MAHKKAGGSTRNGRDSEAKR.

It belongs to the bacterial ribosomal protein bL27 family.

In Proteus mirabilis (strain HI4320), this protein is Large ribosomal subunit protein bL27.